A 264-amino-acid polypeptide reads, in one-letter code: Thymidylate synthase (264 aa).

Arg21 contributes to the dUMP binding site. A (6R)-5,10-methylene-5,6,7,8-tetrahydrofolate-binding site is contributed by His51. 126–127 (RR) lines the dUMP pocket. The active-site Nucleophile is the Cys146. DUMP is bound by residues 166-169 (RSAD), Asn177, and 207-209 (HLY). Asp169 contacts (6R)-5,10-methylene-5,6,7,8-tetrahydrofolate. Ala263 is a binding site for (6R)-5,10-methylene-5,6,7,8-tetrahydrofolate.

The protein belongs to the thymidylate synthase family. Bacterial-type ThyA subfamily. In terms of assembly, homodimer.

The protein resides in the cytoplasm. The catalysed reaction is dUMP + (6R)-5,10-methylene-5,6,7,8-tetrahydrofolate = 7,8-dihydrofolate + dTMP. Its pathway is pyrimidine metabolism; dTTP biosynthesis. Catalyzes the reductive methylation of 2'-deoxyuridine-5'-monophosphate (dUMP) to 2'-deoxythymidine-5'-monophosphate (dTMP) while utilizing 5,10-methylenetetrahydrofolate (mTHF) as the methyl donor and reductant in the reaction, yielding dihydrofolate (DHF) as a by-product. This enzymatic reaction provides an intracellular de novo source of dTMP, an essential precursor for DNA biosynthesis. In Thiobacillus denitrificans (strain ATCC 25259 / T1), this protein is Thymidylate synthase.